We begin with the raw amino-acid sequence, 757 residues long: NAD(P)H-quinone oxidoreductase subunit 5, chloroplastic (757 aa).

Transmembrane regions (helical) follow at residues 9–29 (WIIP…LLLV), 40–60 (WAFP…DLSV), 89–109 (IDPL…MVLI), 122–139 (LRFF…LGLV), 147–167 (IYIF…FWFT), 185–205 (GDFG…SFEF), 219–239 (NGVN…GAVA), 258–278 (TPIS…FLVA), 280–300 (LLPL…IGVI), 327–347 (LGYI…FHLI), 354–374 (ALLF…VGYS), 396–416 (MTFL…CFWS), 425–445 (WLYS…TAFY), 544–564 (LLPL…GIPF), 607–627 (SIAY…YLFF), 692–712 (GIMN…KYLG), and 718–738 (SYLF…IFFF).

It belongs to the complex I subunit 5 family. In terms of assembly, NDH is composed of at least 16 different subunits, 5 of which are encoded in the nucleus.

The protein resides in the plastid. Its subcellular location is the chloroplast thylakoid membrane. It carries out the reaction a plastoquinone + NADH + (n+1) H(+)(in) = a plastoquinol + NAD(+) + n H(+)(out). It catalyses the reaction a plastoquinone + NADPH + (n+1) H(+)(in) = a plastoquinol + NADP(+) + n H(+)(out). In terms of biological role, NDH shuttles electrons from NAD(P)H:plastoquinone, via FMN and iron-sulfur (Fe-S) centers, to quinones in the photosynthetic chain and possibly in a chloroplast respiratory chain. The immediate electron acceptor for the enzyme in this species is believed to be plastoquinone. Couples the redox reaction to proton translocation, and thus conserves the redox energy in a proton gradient. This Drimys granadensis protein is NAD(P)H-quinone oxidoreductase subunit 5, chloroplastic (ndhF).